A 356-amino-acid chain; its full sequence is Alanine racemase, catabolic (356 aa).

The Proton acceptor; specific for D-alanine role is filled by Lys35. The residue at position 35 (Lys35) is an N6-(pyridoxal phosphate)lysine. Residue Arg130 participates in substrate binding. Residue Tyr253 is the Proton acceptor; specific for L-alanine of the active site. Position 301 (Met301) interacts with substrate.

It belongs to the alanine racemase family. Requires pyridoxal 5'-phosphate as cofactor.

It carries out the reaction L-alanine = D-alanine. Functionally, isomerizes L-alanine to D-alanine which is then oxidized to pyruvate by DadA. This is Alanine racemase, catabolic (dadX) from Escherichia coli (strain K12).